Here is a 104-residue protein sequence, read N- to C-terminus: Histone H4 (104 aa).

Residues 1–21 form a disordered region; that stretch reads MAGRGKVGKGYGKVGAKRHTK.

The protein belongs to the histone H4 family. In terms of assembly, the nucleosome is a histone octamer containing two molecules each of H2A, H2B, H3 and H4 assembled in one H3-H4 heterotetramer and two H2A-H2B heterodimers. The octamer wraps approximately 147 bp of DNA.

The protein resides in the nucleus. Its subcellular location is the chromosome. Functionally, core component of nucleosome. Nucleosomes wrap and compact DNA into chromatin, limiting DNA accessibility to the cellular machineries which require DNA as a template. Histones thereby play a central role in transcription regulation, DNA repair, DNA replication and chromosomal stability. DNA accessibility is regulated via a complex set of post-translational modifications of histones, also called histone code, and nucleosome remodeling. This chain is Histone H4, found in Sterkiella nova (Ciliate).